The following is a 325-amino-acid chain: MKNFSLWCDFIENSFLDNEFLNLLSHGINGATSNPAIFKNAILNSPIYKDKILKLKGKKTKDIYEELAISDIQKAADKLAPLFYQKNDGFISIEIDPRLHDNTTLSLGEAKRLYSAISKENVMIKIPATKASYEVMYELMKNGISVNATLIFSLEQSQKCFEALNAGLVEFRKNNIALKEQNTRTPQAVISIFVSRFDRLLNPKAKEQNRIGILNANLAYNNIYSKNEPNIRALFASTGVKGDDLPKDYYIKELLFENSVNTAPLDAIEAFKGKMHFKKPLMNFEIYTELNQIISQSEREKACNDLLSDGLEQFCIAFEDILKAL.

The active-site Schiff-base intermediate with substrate is Lys-125.

Belongs to the transaldolase family. Type 2 subfamily.

The protein localises to the cytoplasm. The catalysed reaction is D-sedoheptulose 7-phosphate + D-glyceraldehyde 3-phosphate = D-erythrose 4-phosphate + beta-D-fructose 6-phosphate. Its pathway is carbohydrate degradation; pentose phosphate pathway; D-glyceraldehyde 3-phosphate and beta-D-fructose 6-phosphate from D-ribose 5-phosphate and D-xylulose 5-phosphate (non-oxidative stage): step 2/3. Functionally, transaldolase is important for the balance of metabolites in the pentose-phosphate pathway. The sequence is that of Transaldolase from Campylobacter jejuni subsp. jejuni serotype O:23/36 (strain 81-176).